The primary structure comprises 701 residues: Elongation factor G (701 aa).

The tr-type G domain maps to 8–290 (SLYRNIGISA…AVVELLPAPT (283 aa)). GTP contacts are provided by residues 17–24 (AHIDAGKT), 88–92 (DTPGH), and 142–145 (NKMD).

The protein belongs to the TRAFAC class translation factor GTPase superfamily. Classic translation factor GTPase family. EF-G/EF-2 subfamily.

The protein resides in the cytoplasm. Catalyzes the GTP-dependent ribosomal translocation step during translation elongation. During this step, the ribosome changes from the pre-translocational (PRE) to the post-translocational (POST) state as the newly formed A-site-bound peptidyl-tRNA and P-site-bound deacylated tRNA move to the P and E sites, respectively. Catalyzes the coordinated movement of the two tRNA molecules, the mRNA and conformational changes in the ribosome. This is Elongation factor G from Neisseria meningitidis serogroup B (strain ATCC BAA-335 / MC58).